The sequence spans 248 residues: Probable transcriptional regulatory protein Plav_2114 (248 aa).

This sequence belongs to the TACO1 family.

The protein localises to the cytoplasm. The sequence is that of Probable transcriptional regulatory protein Plav_2114 from Parvibaculum lavamentivorans (strain DS-1 / DSM 13023 / NCIMB 13966).